The primary structure comprises 231 residues: Class A basic helix-loop-helix protein 9 (231 aa).

In terms of domain architecture, bHLH spans 61–113 (ARRMAANVRERKRILDYNEAFNALRRALQHDLGGKRLSKIATLRRAIHRITAL). A disordered region spans residues 135-168 (QAAQGSSTGNSSFSVPRSAPSPIAPSLTRRDIAS). Residues 137-149 (AQGSSTGNSSFSV) are compositionally biased toward polar residues.

Heterodimer. Efficient DNA binding requires dimerization with another bHLH protein. Interacts with TCF3, TCF4, and TCF12.

The protein resides in the nucleus. Transcription factor, which play a role in limb development. Is an essential player in the regulatory network governing transcription of genes implicated in limb morphogenesis. This chain is Class A basic helix-loop-helix protein 9 (Bhlha9), found in Mus musculus (Mouse).